The chain runs to 337 residues: tRNA-dihydrouridine synthase B (337 aa).

FMN contacts are provided by residues 19–21 (PMA) and Gln-73. Catalysis depends on Cys-103, which acts as the Proton donor. FMN contacts are provided by residues Lys-142, 203 to 205 (NGD), and 227 to 228 (GR).

This sequence belongs to the Dus family. DusB subfamily. FMN is required as a cofactor.

The enzyme catalyses a 5,6-dihydrouridine in tRNA + NAD(+) = a uridine in tRNA + NADH + H(+). The catalysed reaction is a 5,6-dihydrouridine in tRNA + NADP(+) = a uridine in tRNA + NADPH + H(+). Functionally, catalyzes the synthesis of 5,6-dihydrouridine (D), a modified base found in the D-loop of most tRNAs, via the reduction of the C5-C6 double bond in target uridines. This chain is tRNA-dihydrouridine synthase B, found in Pseudomonas putida (strain ATCC 47054 / DSM 6125 / CFBP 8728 / NCIMB 11950 / KT2440).